A 175-amino-acid polypeptide reads, in one-letter code: Gamma-crystallin B (175 aa).

2 consecutive Beta/gamma crystallin 'Greek key' domains span residues 2 to 40 and 41 to 83; these read GKIT…RVDS and GCWM…RLIP. Positions 84 to 88 are connecting peptide; sequence QHSGT. 2 consecutive Beta/gamma crystallin 'Greek key' domains span residues 89-129 and 130-172; these read YRMR…NVME and GCWV…RRVM.

The protein belongs to the beta/gamma-crystallin family.

In terms of biological role, crystallins are the dominant structural components of the vertebrate eye lens. The chain is Gamma-crystallin B (Crygb) from Rattus norvegicus (Rat).